A 183-amino-acid chain; its full sequence is DELTA-miturgitoxin-Cp1b (183 aa).

The first 20 residues, 1–20 (MKFSLFFSVFFLAVLHACLS), serve as a signal peptide directing secretion. Residues 21-47 (ESEIDLEDEEHFMSSDSFLSEIQDESR) constitute a propeptide that is removed on maturation. The Processing quadruplet motif signature appears at 44 to 47 (DESR). Disulfide bonds link C51-C66, C58-C75, C65-C88, C77-C86, C115-C130, C122-C139, C129-C157, and C141-C155. A predicted alpha-helix region spans residues 164–177 (QAIEGALRIAKKLI). Tryptophan amide is present on W181.

It belongs to the neurotoxin 19 (CSTX) family. Double-CSTX subfamily. Cleavage of the propeptide depends on the processing quadruplet motif (XXXR, with at least one of X being E). As to expression, expressed by the venom gland.

Its subcellular location is the secreted. It localises to the target cell membrane. Spider venom toxin that exhibits cytolytic activity by forming an alpha-helix across the membrane. Lethal to insect larvae. Causes instant paralysis and death in the larvae of the flesh fly (S.carnaria) at doses of 20 ug/g, at doses of less than 10 ug/g causes reversible paralysis. Has cytolytic activity against insect Sf9 cells. Causes stable and irreversible depolarization of fly muscle fibers, leading to contracture at higher toxin concentrations. Destabilizes membranes. This chain is DELTA-miturgitoxin-Cp1b, found in Cheiracanthium punctorium (Yellow sac spider).